The following is a 928-amino-acid chain: MRVKDTLNLGKTKFKMRGNLPVREAEWQKEWEENKLYEQRLKLNEGKPRFDLHDGPPFANGNIHMGHSLNKISKDIIVRFKNMNGYYAPYVPGWDTHGLPVEQQLAKKGVDRKTMDRAKYRELCRQFAEEQVQKQMADFKRLGVMADWDHPYITLQPKFEAEEIRVFGEMFKKGYIYKGKKPVYWSWSSESTLAEAEVEYHDIKSPRIYVAFPIKDGKGILDSDTSLVIWTTTPWTIPSNVGITVNPKFDYSVVEVNGKKYVIGSQRLSAVAEDLGWEDYKVVKTLKGTDFDRMTYQHPLYDVTGVIMNDTYVTADDGTGLVHNATGFGEDDYNVGRRYGLPVFSPMDAQGRFTKEVPDPDLVGMFYDDANKVVADKLEKAGALLKLSFFTHSYPHDWRTKKPVIYRATTQWFASIDKFRDQILAEIEKANFIPAWGKTRLYNMIKDRGDWVISRQRAWGVPLPIFYAEDDTPIVTPETIEHVAQIFEKEGSNAWYTYTAEELLPEGFKSEHSPNGKFRKETDILDVWFDSGSSWAGVMQERDGLGFPADLYLEGSDQYRGWFNSSLITSVAVTGKAPYKQVLSQGFVLDDKGHKMSKSLGNVISPNDVIKQMGAEIIRLWVAGADTTSDVAVSQDILRQSAESYRKIRNTMRFMLANTSDFDPKEDAIAYPDMSGVDQYMEIKLNRLIEEAIEAYNKFDFNSVYKKVFSFISNDLSAFYLDFAKDILYIDAEDSETRRSMQTVIYDVLVKLTKLMTPILPHTMEEVWGYLKEPEDYVQLANMPEVDHFANEDEVLADWNAFMKVRSDVLKALEKARNAKVIGKSFEAHVTLYPTEETKALLDKLNANIRQILIVSDLTISDEEAPENAEKLPTASIVVEHAAGEVCPRCRRTTTDVGSDPRFPELCARCAAIVAENFPEAEKEGLEK.

The short motif at 57-67 (PFANGNIHMGH) is the 'HIGH' region element. Glutamate 554 is an L-isoleucyl-5'-AMP binding site. The 'KMSKS' region motif lies at 595 to 599 (KMSKS). Lysine 598 is a binding site for ATP. Positions 887, 890, 907, and 910 each coordinate Zn(2+).

Belongs to the class-I aminoacyl-tRNA synthetase family. IleS type 1 subfamily. Monomer. Zn(2+) is required as a cofactor.

The protein resides in the cytoplasm. It catalyses the reaction tRNA(Ile) + L-isoleucine + ATP = L-isoleucyl-tRNA(Ile) + AMP + diphosphate. Its function is as follows. Catalyzes the attachment of isoleucine to tRNA(Ile). As IleRS can inadvertently accommodate and process structurally similar amino acids such as valine, to avoid such errors it has two additional distinct tRNA(Ile)-dependent editing activities. One activity is designated as 'pretransfer' editing and involves the hydrolysis of activated Val-AMP. The other activity is designated 'posttransfer' editing and involves deacylation of mischarged Val-tRNA(Ile). In Lactobacillus johnsonii (strain CNCM I-12250 / La1 / NCC 533), this protein is Isoleucine--tRNA ligase.